The following is a 117-amino-acid chain: Large ribosomal subunit protein bL17 (117 aa).

It belongs to the bacterial ribosomal protein bL17 family. Part of the 50S ribosomal subunit. Contacts protein L32.

This chain is Large ribosomal subunit protein bL17, found in Endomicrobium trichonymphae.